The sequence spans 302 residues: Bifunctional protein FolD (302 aa).

NADP(+) contacts are provided by residues 165-167 (GRS), serine 190, and isoleucine 231.

Belongs to the tetrahydrofolate dehydrogenase/cyclohydrolase family. In terms of assembly, homodimer.

The enzyme catalyses (6R)-5,10-methylene-5,6,7,8-tetrahydrofolate + NADP(+) = (6R)-5,10-methenyltetrahydrofolate + NADPH. The catalysed reaction is (6R)-5,10-methenyltetrahydrofolate + H2O = (6R)-10-formyltetrahydrofolate + H(+). It participates in one-carbon metabolism; tetrahydrofolate interconversion. In terms of biological role, catalyzes the oxidation of 5,10-methylenetetrahydrofolate to 5,10-methenyltetrahydrofolate and then the hydrolysis of 5,10-methenyltetrahydrofolate to 10-formyltetrahydrofolate. The polypeptide is Bifunctional protein FolD (Prochlorococcus marinus (strain MIT 9313)).